Consider the following 376-residue polypeptide: uncharacterized protein (376 aa).

The protein belongs to the NAD(P)-dependent epimerase/dehydratase family.

This is an uncharacterized protein from Mycobacterium bovis (strain ATCC BAA-935 / AF2122/97).